The primary structure comprises 1223 residues: RNA-binding protein 20 (1223 aa).

3 disordered regions span residues 1–59, 238–288, and 306–381; these read MVLA…QAGL, QAYG…PTSQ, and GEVG…GARR. Positions 29–57 are enriched in pro residues; the sequence is APAPPAPPGPRGMQPPPPPPPPPPPPPQA. 2 stretches are compositionally biased toward polar residues: residues 238–261 and 314–331; these read QAYGSETDSQPSFLPASASTSGSV and GPNSQWESPHGFSGQSKP. The U1-type zinc-finger motif lies at 410-444; it reads HLPHICSICDKKVFDLKDWELHVKGKLHAQKCLLF. The RRM domain maps to 520–595; that stretch reads RVVHICNLPE…EKLLIRMSKR (76 aa). Positions 626–636 are enriched in basic and acidic residues; it reads EADRYGPERPR. Disordered regions lie at residues 626–902, 971–995, and 1042–1102; these read EADR…TNME, EISLKSPKEPPSASTSCPSDMDVEM, and MSSP…STQE. Positions 630-657 are RS; it reads YGPERPRSRSPVSRSLSPRSHTPSFTSC. 6 positions are modified to phosphoserine: S637, S639, S642, S644, S662, and S681. Over residues 638–662 the composition is skewed to low complexity; the sequence is RSPVSRSLSPRSHTPSFTSCSSSHS. 2 stretches are compositionally biased toward basic and acidic residues: residues 676–711 and 718–737; these read DSWEHSPYARREEERGPAPWRENGEDKRDRTDMWAH and RQVDKTELDERLEGGRGYRE. Low complexity predominate over residues 742–752; sequence SGSPSSLHSVS. At S744 the chain carries Phosphoserine. 2 stretches are compositionally biased toward basic and acidic residues: residues 755–774 and 786–852; these read KSREDGYYRKEPKGKSDKYL and RKDE…KEEQ. Phosphoserine occurs at positions 803, 861, 872, 887, 889, 973, 976, and 1044. The span at 864 to 884 shows a compositional bias: basic and acidic residues; it reads RQEKETESSDAENTRTRKEQD. The segment covering 1083-1102 has biased composition (polar residues); that stretch reads STPTETDLQSQACQGVSTQE. Residues S1111 and S1116 each carry the phosphoserine modification. Residues 1157 to 1188 form a Matrin-type zinc finger; sequence FYCKLCGLFYTSEEMAKMSHCRSAVHYRNLQK. A disordered region spans residues 1197-1223; it reads GLKETEGAGSPRPEDSGIVPHFERKKL. Phosphoserine is present on S1206.

Associates with components of the U1 and U2 U1 small nuclear ribonucleoprotein complexes. In terms of processing, phosphorylation regulates the subcellular localization. Phosphorylation of Ser-637 and Ser-639 in the RS (arginine/serine-rich) region promotes nuclear localization of the protein. In contrast, phosphorylation of the C-terminal disordered region promotes localization to cytoplasmic ribonucleoprotein granules.

The protein localises to the nucleus. The protein resides in the cytoplasm. It localises to the cytoplasmic ribonucleoprotein granule. Its function is as follows. RNA-binding protein that acts as a regulator of mRNA splicing of a subset of genes encoding key structural proteins involved in cardiac development, such as TTN (Titin), CACNA1C, CAMK2D or PDLIM5/ENH. Acts as a repressor of mRNA splicing: specifically binds the 5'UCUU-3' motif that is predominantly found within intronic sequences of pre-mRNAs, leading to the exclusion of specific exons in target transcripts. RBM20-mediated exon skipping is hormone-dependent and is essential for TTN isoform transition in both cardiac and skeletal muscles. RBM20-mediated exon skipping of TTN provides substrates for the formation of circular RNA (circRNAs) from the TTN transcripts. Together with RBM24, promotes the expression of short isoforms of PDLIM5/ENH in cardiomyocytes. This is RNA-binding protein 20 from Sus scrofa (Pig).